A 175-amino-acid chain; its full sequence is Ribosome maturation factor RimM (175 aa).

Positions 98 to 175 (EGEYYWHQLE…EMRVDWDADF (78 aa)) constitute a PRC barrel domain.

The protein belongs to the RimM family. Binds ribosomal protein uS19.

The protein localises to the cytoplasm. In terms of biological role, an accessory protein needed during the final step in the assembly of 30S ribosomal subunit, possibly for assembly of the head region. Essential for efficient processing of 16S rRNA. May be needed both before and after RbfA during the maturation of 16S rRNA. It has affinity for free ribosomal 30S subunits but not for 70S ribosomes. In Pseudomonas aeruginosa (strain ATCC 15692 / DSM 22644 / CIP 104116 / JCM 14847 / LMG 12228 / 1C / PRS 101 / PAO1), this protein is Ribosome maturation factor RimM.